Reading from the N-terminus, the 454-residue chain is Golgi reassembly-stacking protein 2 (454 aa).

Gly-2 carries N-myristoyl glycine lipidation. 2 consecutive PDZ GRASP-type domains span residues 15 to 105 (EGYH…FCSF) and 111 to 199 (NVWH…YGYL). Residues 15-215 (EGYHVLRVQE…PFEEGKKISL (201 aa)) form a GRASP region. Arg-30 and Arg-47 each carry dimethylated arginine. Residues 194–199 (IGYGYL) form an important for membrane binding region. Ser-214 is subject to Phosphoserine. Thr-222 bears the Phosphothreonine mark. Residue Thr-225 is modified to Phosphothreonine; by MAPK. The tract at residues 377 to 454 (EGSSAASAGE…VTDANASGAS (78 aa)) is disordered. The residue at position 411 (Ser-411) is a Phosphoserine. The residue at position 435 (Thr-435) is a Phosphothreonine. 2 positions are modified to phosphoserine: Ser-443 and Ser-451.

It belongs to the GORASP family. In terms of assembly, homodimer. Homooligomer. ER stress induces phosphorylation-dependent monomerization. Interacts with BLZF1/Golgin 45. Identified in a complex with RAB2 and GORASP2. Interacts with JAM2 and JAM3. Interacts with members of the p24 cargo receptors. Interacts with CNIH1 and the cytoplasmic domain of transmembrane TGFA, prior its transit in the trans-Golgi. Interacts with KCTD5. Interacts with TMED2 and TMED3. Interacts with SEC16A in response to ER stress. Interacts (via PDZ GRASP-type 1 domain) with core-glycosylated CFTR in response to ER stress. Post-translationally, myristoylated. Myristoylation is essential for the Golgi targeting. In terms of processing, palmitoylated. Phosphorylated in mitotic cells. ER stress-induced phosphorylation at Ser-443 induces monomerization and subsequent relocalization from Golgi to ER which is essential for mediating unconventional (ER/Golgi-independent) trafficking of CFTR to the cell membrane. As to expression, detected in lung, brain, heart, liver and testis.

Its subcellular location is the golgi apparatus membrane. It is found in the endoplasmic reticulum membrane. The protein resides in the golgi apparatus. In terms of biological role, key structural protein of the Golgi apparatus. The membrane cisternae of the Golgi apparatus adhere to each other to form stacks, which are aligned side by side to form the Golgi ribbon. Acting in concert with GORASP1/GRASP65, is required for the formation and maintenance of the Golgi ribbon, and may be dispensable for the formation of stacks. However, other studies suggest that GORASP2 plays a role in the assembly and membrane stacking of the Golgi cisternae, and in the process by which Golgi stacks reform after breakdown during mitosis and meiosis. May regulate the intracellular transport and presentation of a defined set of transmembrane proteins, such as transmembrane TGFA. Required for normal acrosome formation during spermiogenesis and normal male fertility, probably by promoting colocalization of JAM2 and JAM3 at contact sites between germ cells and Sertoli cells. Mediates ER stress-induced unconventional (ER/Golgi-independent) trafficking of core-glycosylated CFTR to cell membrane. The polypeptide is Golgi reassembly-stacking protein 2 (Gorasp2) (Rattus norvegicus (Rat)).